Reading from the N-terminus, the 268-residue chain is UPF0354 protein OB2234 (268 aa).

This sequence belongs to the UPF0354 family.

The sequence is that of UPF0354 protein OB2234 from Oceanobacillus iheyensis (strain DSM 14371 / CIP 107618 / JCM 11309 / KCTC 3954 / HTE831).